Reading from the N-terminus, the 1024-residue chain is Beta-galactosidase (1024 aa).

Substrate-binding residues include asparagine 103 and aspartate 202. Aspartate 202 contacts Na(+). Positions 417, 419, and 462 each coordinate Mg(2+). Substrate-binding positions include glutamate 462 and glutamate 538–histidine 541. Glutamate 462 serves as the catalytic Proton donor. The active-site Nucleophile is the glutamate 538. Asparagine 598 lines the Mg(2+) pocket. Positions 602 and 605 each coordinate Na(+). Substrate contacts are provided by asparagine 605 and tryptophan 1000.

This sequence belongs to the glycosyl hydrolase 2 family. Homotetramer. Mg(2+) serves as cofactor. The cofactor is Na(+).

The catalysed reaction is Hydrolysis of terminal non-reducing beta-D-galactose residues in beta-D-galactosides.. This chain is Beta-galactosidase, found in Escherichia coli O17:K52:H18 (strain UMN026 / ExPEC).